The following is a 512-amino-acid chain: Glutathione-binding protein GsiB (512 aa).

Residues 1 to 26 (MARAVHRSGLVALGIVTALMASCAFA) form the signal peptide.

It belongs to the bacterial solute-binding protein 5 family. In terms of assembly, the complex is composed of two ATP-binding proteins (GsiA), two transmembrane proteins (GsiC and GsiD) and a solute-binding protein (GsiB).

The protein localises to the periplasm. Part of the ABC transporter complex GsiABCD involved in glutathione import. Binds glutathione. This Shigella dysenteriae serotype 1 (strain Sd197) protein is Glutathione-binding protein GsiB.